The sequence spans 191 residues: Transmembrane protein 17B (191 aa).

The next 4 membrane-spanning stretches (helical) occupy residues 50–70 (MSLY…VVML), 83–103 (FILI…LYLG), 115–135 (LAGF…FQLF), and 147–167 (GVHI…FVAL).

The protein belongs to the TMEM17 family. Part of the tectonic-like complex (also named B9 complex).

It localises to the cell projection. The protein resides in the cilium membrane. Its function is as follows. Transmembrane component of the tectonic-like complex, a complex localized at the transition zone of primary cilia and acting as a barrier that prevents diffusion of transmembrane proteins between the cilia and plasma membranes. Required for ciliogenesis and sonic hedgehog/SHH signaling. This chain is Transmembrane protein 17B (Tmem17b), found in Danio rerio (Zebrafish).